The following is a 249-amino-acid chain: Aliphatic sulfonates import ATP-binding protein SsuB 2 (249 aa).

The region spanning 5-233 (LDLLEIRKAY…PRDRRAVELA (229 aa)) is the ABC transporter domain. 37 to 44 (GPSGCGKS) serves as a coordination point for ATP.

It belongs to the ABC transporter superfamily. Aliphatic sulfonates importer (TC 3.A.1.17.2) family. As to quaternary structure, the complex is composed of two ATP-binding proteins (SsuB), two transmembrane proteins (SsuC) and a solute-binding protein (SsuA).

It is found in the cell inner membrane. It carries out the reaction ATP + H2O + aliphatic sulfonate-[sulfonate-binding protein]Side 1 = ADP + phosphate + aliphatic sulfonateSide 2 + [sulfonate-binding protein]Side 1.. Functionally, part of the ABC transporter complex SsuABC involved in aliphatic sulfonates import. Responsible for energy coupling to the transport system. This chain is Aliphatic sulfonates import ATP-binding protein SsuB 2, found in Pseudomonas aeruginosa (strain ATCC 15692 / DSM 22644 / CIP 104116 / JCM 14847 / LMG 12228 / 1C / PRS 101 / PAO1).